The primary structure comprises 258 residues: Ubiquinone/menaquinone biosynthesis C-methyltransferase UbiE (258 aa).

Residues 1–21 (MPESRTSADGGMETSYGFREV) form a disordered region. Residues Thr-81, Asp-102, and 130 to 131 (NA) each bind S-adenosyl-L-methionine.

The protein belongs to the class I-like SAM-binding methyltransferase superfamily. MenG/UbiE family.

The enzyme catalyses a 2-demethylmenaquinol + S-adenosyl-L-methionine = a menaquinol + S-adenosyl-L-homocysteine + H(+). It catalyses the reaction a 2-methoxy-6-(all-trans-polyprenyl)benzene-1,4-diol + S-adenosyl-L-methionine = a 5-methoxy-2-methyl-3-(all-trans-polyprenyl)benzene-1,4-diol + S-adenosyl-L-homocysteine + H(+). The protein operates within quinol/quinone metabolism; menaquinone biosynthesis; menaquinol from 1,4-dihydroxy-2-naphthoate: step 2/2. Its pathway is cofactor biosynthesis; ubiquinone biosynthesis. In terms of biological role, methyltransferase required for the conversion of demethylmenaquinol (DMKH2) to menaquinol (MKH2) and the conversion of 2-polyprenyl-6-methoxy-1,4-benzoquinol (DDMQH2) to 2-polyprenyl-3-methyl-6-methoxy-1,4-benzoquinol (DMQH2). The protein is Ubiquinone/menaquinone biosynthesis C-methyltransferase UbiE of Rhizobium leguminosarum bv. trifolii (strain WSM2304).